The sequence spans 250 residues: Small ribosomal subunit protein uS2 (250 aa).

This sequence belongs to the universal ribosomal protein uS2 family.

This is Small ribosomal subunit protein uS2 from Acidovorax sp. (strain JS42).